The primary structure comprises 183 residues: MLILASSSISRANLLKTAKIDFRQVSFDYDENLNKNISPFLYVQKIVLEKERQFLSTLGKDFQNQNLLFADSIVCIDEKILTKAKDKKEAYEMLALQNGKYASILSAFLLVKPEKRVFSLSKTTLYFKNFDENALRDYVENDLYKGKAGCIMCEGFHQNFITQQVGNLSTALGLDIQTLKAYL.

Residue aspartate 71 is the Proton acceptor of the active site.

It belongs to the Maf family. It depends on a divalent metal cation as a cofactor.

It is found in the cytoplasm. The catalysed reaction is a ribonucleoside 5'-triphosphate + H2O = a ribonucleoside 5'-phosphate + diphosphate + H(+). The enzyme catalyses a 2'-deoxyribonucleoside 5'-triphosphate + H2O = a 2'-deoxyribonucleoside 5'-phosphate + diphosphate + H(+). Nucleoside triphosphate pyrophosphatase. May have a dual role in cell division arrest and in preventing the incorporation of modified nucleotides into cellular nucleic acids. The polypeptide is Nucleoside triphosphate pyrophosphatase (Campylobacter jejuni subsp. jejuni serotype O:2 (strain ATCC 700819 / NCTC 11168)).